Consider the following 375-residue polypeptide: Succinyl-diaminopimelate desuccinylase (375 aa).

His66 lines the Zn(2+) pocket. Residue Asp68 is part of the active site. Position 99 (Asp99) interacts with Zn(2+). The active-site Proton acceptor is Glu133. 3 residues coordinate Zn(2+): Glu134, Glu162, and His348.

The protein belongs to the peptidase M20A family. DapE subfamily. Homodimer. The cofactor is Zn(2+). Requires Co(2+) as cofactor.

The enzyme catalyses N-succinyl-(2S,6S)-2,6-diaminopimelate + H2O = (2S,6S)-2,6-diaminopimelate + succinate. It participates in amino-acid biosynthesis; L-lysine biosynthesis via DAP pathway; LL-2,6-diaminopimelate from (S)-tetrahydrodipicolinate (succinylase route): step 3/3. Catalyzes the hydrolysis of N-succinyl-L,L-diaminopimelic acid (SDAP), forming succinate and LL-2,6-diaminopimelate (DAP), an intermediate involved in the bacterial biosynthesis of lysine and meso-diaminopimelic acid, an essential component of bacterial cell walls. In Teredinibacter turnerae (strain ATCC 39867 / T7901), this protein is Succinyl-diaminopimelate desuccinylase.